The sequence spans 73 residues: Toxin Td12 (73 aa).

An N-terminal signal peptide occupies residues 1–7 (IGMVIEC). The 63-residue stretch at 8–70 (KDGYLMEPNG…TWDRATNTCG (63 aa)) folds into the LCN-type CS-alpha/beta domain. Intrachain disulfides connect Cys-18-Cys-69, Cys-22-Cys-44, Cys-30-Cys-50, and Cys-34-Cys-52. Residue Arg-71 is modified to Arginine amide.

It belongs to the long (4 C-C) scorpion toxin superfamily. Sodium channel inhibitor family. Beta subfamily. Expressed by the venom gland.

The protein resides in the secreted. Functionally, beta toxins bind voltage-independently at site-4 of sodium channels (Nav) and shift the voltage of activation toward more negative potentials thereby affecting sodium channel activation and promoting spontaneous and repetitive firing. This Tityus discrepans (Venezuelan scorpion) protein is Toxin Td12.